We begin with the raw amino-acid sequence, 157 residues long: Protein-export protein SecB (157 aa).

This sequence belongs to the SecB family. Homotetramer, a dimer of dimers. One homotetramer interacts with 1 SecA dimer.

The protein localises to the cytoplasm. Its function is as follows. One of the proteins required for the normal export of preproteins out of the cell cytoplasm. It is a molecular chaperone that binds to a subset of precursor proteins, maintaining them in a translocation-competent state. It also specifically binds to its receptor SecA. The chain is Protein-export protein SecB from Proteus mirabilis (strain HI4320).